An 83-amino-acid polypeptide reads, in one-letter code: Neurotoxin 3FTx-RI (83 aa).

Residues 1-21 (MKTLLLTLVVLTIVCLDLGHT) form the signal peptide. 4 disulfide bridges follow: C24-C45, C38-C62, C64-C75, and C76-C81.

This sequence belongs to the three-finger toxin family. Short-chain subfamily. Type I alpha-neurotoxin sub-subfamily. As to expression, expressed by the venom gland.

It localises to the secreted. Binds to muscle nicotinic acetylcholine receptor (nAChR) and inhibit acetylcholine from binding to the receptor, thereby impairing neuromuscular transmission. The polypeptide is Neurotoxin 3FTx-RI (Bungarus fasciatus (Banded krait)).